Here is a 79-residue protein sequence, read N- to C-terminus: ATP synthase subunit c (79 aa).

2 helical membrane-spanning segments follow: residues 11–31 and 53–73; these read IAAAIMMGLSAIGAAVGIGIL and FFIVMGLVDAIPMITVGLSLY.

This sequence belongs to the ATPase C chain family. F-type ATPases have 2 components, F(1) - the catalytic core - and F(0) - the membrane proton channel. F(1) has five subunits: alpha(3), beta(3), gamma(1), delta(1), epsilon(1). F(0) has three main subunits: a(1), b(2) and c(10-14). The alpha and beta chains form an alternating ring which encloses part of the gamma chain. F(1) is attached to F(0) by a central stalk formed by the gamma and epsilon chains, while a peripheral stalk is formed by the delta and b chains.

The protein resides in the cell inner membrane. In terms of biological role, f(1)F(0) ATP synthase produces ATP from ADP in the presence of a proton or sodium gradient. F-type ATPases consist of two structural domains, F(1) containing the extramembraneous catalytic core and F(0) containing the membrane proton channel, linked together by a central stalk and a peripheral stalk. During catalysis, ATP synthesis in the catalytic domain of F(1) is coupled via a rotary mechanism of the central stalk subunits to proton translocation. Its function is as follows. Key component of the F(0) channel; it plays a direct role in translocation across the membrane. A homomeric c-ring of between 10-14 subunits forms the central stalk rotor element with the F(1) delta and epsilon subunits. The sequence is that of ATP synthase subunit c from Blochmanniella floridana.